Consider the following 336-residue polypeptide: Cell division protein ZipA (336 aa).

The Periplasmic segment spans residues 1-2 (ME). Residues 3–23 (LHILFFILAGLLIAVLISFSL) form a helical membrane-spanning segment. The Cytoplasmic portion of the chain corresponds to 24–336 (WSARREKSRI…SRQSYLARVS (313 aa)). The tract at residues 56–77 (PSLNPQSYAQTTGQHGETEADN) is disordered. A compositionally biased stretch (polar residues) spans 59–70 (NPQSYAQTTGQH).

It belongs to the ZipA family. In terms of assembly, interacts with FtsZ via their C-terminal domains.

It is found in the cell inner membrane. Essential cell division protein that stabilizes the FtsZ protofilaments by cross-linking them and that serves as a cytoplasmic membrane anchor for the Z ring. Also required for the recruitment to the septal ring of downstream cell division proteins. The protein is Cell division protein ZipA of Actinobacillus pleuropneumoniae serotype 3 (strain JL03).